A 238-amino-acid chain; its full sequence is Large ribosomal subunit protein uL2 (238 aa).

The disordered stretch occupies residues 201 to 238 (FGGGGHQHPGRPKTIARGTSPGRTVGHVAARQTGRSRK).

It belongs to the universal ribosomal protein uL2 family. In terms of assembly, part of the 50S ribosomal subunit. Forms a bridge to the 30S subunit in the 70S ribosome.

Functionally, one of the primary rRNA binding proteins. Required for association of the 30S and 50S subunits to form the 70S ribosome, for tRNA binding and peptide bond formation. It has been suggested to have peptidyltransferase activity; this is somewhat controversial. Makes several contacts with the 16S rRNA in the 70S ribosome. This is Large ribosomal subunit protein uL2 from Methanoregula boonei (strain DSM 21154 / JCM 14090 / 6A8).